An 86-amino-acid polypeptide reads, in one-letter code: Putative membrane protein insertion efficiency factor (86 aa).

This sequence belongs to the UPF0161 family.

The protein localises to the cell inner membrane. Could be involved in insertion of integral membrane proteins into the membrane. This is Putative membrane protein insertion efficiency factor from Mannheimia succiniciproducens (strain KCTC 0769BP / MBEL55E).